The sequence spans 227 residues: Orotidine 5'-phosphate decarboxylase (227 aa).

Residues D8, K30, 59 to 68 (DLKLYDIPYT), T118, R178, Q187, G207, and R208 each bind substrate. The Proton donor role is filled by K61.

Belongs to the OMP decarboxylase family. Type 1 subfamily. In terms of assembly, homodimer.

It carries out the reaction orotidine 5'-phosphate + H(+) = UMP + CO2. It functions in the pathway pyrimidine metabolism; UMP biosynthesis via de novo pathway; UMP from orotate: step 2/2. Functionally, catalyzes the decarboxylation of orotidine 5'-monophosphate (OMP) to uridine 5'-monophosphate (UMP). This is Orotidine 5'-phosphate decarboxylase from Helicobacter pylori (strain P12).